We begin with the raw amino-acid sequence, 727 residues long: Rho-related BTB domain-containing protein 2 (727 aa).

A rho-like region spans residues 1 to 210 (MDSDMDYERP…DNAIRAALIS (210 aa)). Residues 21-28 (GDNAVGKT), 84-88 (DTFGD), and 140-143 (CQLD) each bind GTP. 2 consecutive BTB domains span residues 266 to 442 (ADVI…DENE) and 500 to 567 (SDVT…TSSP). The segment at 304 to 333 (ELGGPSEPGGTHPEDHQGHSDQHHHHHHHH) is disordered. Positions 315–324 (HPEDHQGHSD) are enriched in basic and acidic residues. The segment at 703 to 727 (FWNSPSSPSSSAASSSSPSSSSAVV) is disordered. Low complexity predominate over residues 706 to 727 (SPSSPSSSAASSSSPSSSSAVV).

It belongs to the small GTPase superfamily. Rho family. Interacts with HSP90AA1 and HSP90AB1. Forms a complex with CUL3 and RBX1. Interacts (via BTB 1 domain) with CUL3. Interacts with MSI2. In terms of processing, autoubiquitinated by RHOBTB2-CUL3-RBX1 ubiquitin ligase complex. In terms of tissue distribution, ubiquitous, with highest levels in neural tissues. Expression is also detected in fetal lung, heart, and brain.

Regulator of cell proliferation and apoptosis. It likely functions as a substrate-adapter that recruits key substrates, e.g. MSI2, to CUL3-based ubiquitin ligase complexes for degradation. Required for MSI2 ubiquitination and degradation. This Homo sapiens (Human) protein is Rho-related BTB domain-containing protein 2 (RHOBTB2).